A 96-amino-acid polypeptide reads, in one-letter code: Cystatin (96 aa).

In terms of domain architecture, Cystatin spans Asp-22 to Ser-65. A glycan (N-linked (GlcNAc...) asparagine) is linked at Asn-29.

It belongs to the cystatin family. In terms of assembly, interacts with cathepsin L-like peptidase; the interaction results in inhibition of cathepsin L-like peptidase activity. Salivary gland. Midgut.

Its function is as follows. Cysteine proteinase inhibitor. Inhibits cathepsin L-like peptidase. Increases cell viability following apoptosis induction by staurosporine. Inhibits human cathepsin S (CTSS), human cathepsin L2 (CTSV), human cathepsin L (CTSL), human cathepsin B (CTSB) and papain. (Microbial infection) Modulates dengue virus type 2 replication in salivary glands. This chain is Cystatin, found in Aedes aegypti (Yellowfever mosquito).